A 701-amino-acid polypeptide reads, in one-letter code: 1,4-alpha-glucan branching enzyme GlgB (701 aa).

Catalysis depends on Asp381, which acts as the Nucleophile. Glu434 (proton donor) is an active-site residue.

It belongs to the glycosyl hydrolase 13 family. GlgB subfamily. Monomer.

It carries out the reaction Transfers a segment of a (1-&gt;4)-alpha-D-glucan chain to a primary hydroxy group in a similar glucan chain.. The protein operates within glycan biosynthesis; glycogen biosynthesis. Functionally, catalyzes the formation of the alpha-1,6-glucosidic linkages in glycogen by scission of a 1,4-alpha-linked oligosaccharide from growing alpha-1,4-glucan chains and the subsequent attachment of the oligosaccharide to the alpha-1,6 position. The sequence is that of 1,4-alpha-glucan branching enzyme GlgB from Jannaschia sp. (strain CCS1).